The sequence spans 172 residues: Small ribosomal subunit protein uS5 (172 aa).

One can recognise an S5 DRBM domain in the interval 17–80; the sequence is LREKMISVNR…DEARRKMVKV (64 aa).

Belongs to the universal ribosomal protein uS5 family. As to quaternary structure, part of the 30S ribosomal subunit. Contacts proteins S4 and S8.

Functionally, with S4 and S12 plays an important role in translational accuracy. Its function is as follows. Located at the back of the 30S subunit body where it stabilizes the conformation of the head with respect to the body. The polypeptide is Small ribosomal subunit protein uS5 (Cupriavidus taiwanensis (strain DSM 17343 / BCRC 17206 / CCUG 44338 / CIP 107171 / LMG 19424 / R1) (Ralstonia taiwanensis (strain LMG 19424))).